Here is a 98-residue protein sequence, read N- to C-terminus: N(2)-fixation sustaining protein CowN (98 aa).

The protein belongs to the CowN family.

Is required to sustain N(2)-dependent growth in the presence of low levels of carbon monoxide (CO). Probably acts by protecting the N(2) fixation ability of the nitrogenase complex, which is inactivated in the presence of CO. The polypeptide is N(2)-fixation sustaining protein CowN (Azospirillum sp. (strain B510)).